Consider the following 569-residue polypeptide: MSFSMSRKQYADMFGPTVGDAIRLADSELFIEIEKDYTTYGDEVKFGGGKVIRDGMGQHPLATSDECVDLVLTNAIIVDYTGIYKADIGIKDGMIASIGKAGNPLLMDGVDMVIGAATEVIAAEGMIVTAGGIDAHIHFICPQQIETALASGVTTMIGGGTGPATGTNATTCTPGPWNIHRMLQAAEEFPINLGFLGKGNCSDEAPLKEQIEAGAVGLKLHEDWGSTAAAIDTCLKVADRYDVQVAIHTDTLNEGGFVEDTLKAIDGRVIHTYHTEGAGGGHAPDIIKAAGFPNILPSSTNPTRPYTINTLEEHLDMLMVCHHLDANIPEDIAFADSRIRKETIAAEDVLHDLGVFSMISSDSQAMGRVGEVIIRTWQTADKMKKQRGKLQEDNGVGDNFRVKRYIAKYTINPAIAHGIADYVGSVEVGKLADLVVWNPAFFGVKPELVLKGGMIAYSTMGDPNASIPTPQPVLYRPMFAAKGDAKYQTSITFVSKAAYEKGIHEQLGLKKKVKPVHGIRKLTKKDLILNDKTPKIDVDPQTYEVKVDGQLVTCEPAEIVPMAQRYFLF.

The region spanning 131 to 569 (GGIDAHIHFI…VPMAQRYFLF (439 aa)) is the Urease domain. Residues His136, His138, and Lys219 each contribute to the Ni(2+) site. N6-carboxylysine is present on Lys219. His221 lines the substrate pocket. His248 and His274 together coordinate Ni(2+). Catalysis depends on His322, which acts as the Proton donor. A Ni(2+)-binding site is contributed by Asp362.

This sequence belongs to the metallo-dependent hydrolases superfamily. Urease alpha subunit family. As to quaternary structure, heterotrimer of UreA (gamma), UreB (beta) and UreC (alpha) subunits. Three heterotrimers associate to form the active enzyme. Requires Ni cation as cofactor. In terms of processing, carboxylation allows a single lysine to coordinate two nickel ions.

Its subcellular location is the cytoplasm. The enzyme catalyses urea + 2 H2O + H(+) = hydrogencarbonate + 2 NH4(+). It functions in the pathway nitrogen metabolism; urea degradation; CO(2) and NH(3) from urea (urease route): step 1/1. In Bacillus sp. (strain TB-90), this protein is Urease subunit alpha.